We begin with the raw amino-acid sequence, 116 residues long: MSDHEVKMVVLSTENLDESIKFYETLGFSLKFRDGAHFAALDGGAVTLALATPVDHPIPGKVVVGIKTADVDAAAKEIEATGGAIIKGPYDDAHERRAVVYDNTGNGLVFYSPLKR.

The VOC domain maps to 5–113; sequence EVKMVVLSTE…TGNGLVFYSP (109 aa). An Isoglutamyl lysine isopeptide (Lys-Gln) (interchain with Q-Cter in protein Pup) cross-link involves residue K76.

This is an uncharacterized protein from Mycolicibacterium smegmatis (strain ATCC 700084 / mc(2)155) (Mycobacterium smegmatis).